The chain runs to 147 residues: Cytochrome c oxidase subunit 3 (147 aa).

4 helical membrane passes run 13–33 (FQIP…VTWA), 48–68 (GLFI…YEYF), 83–103 (FFMA…FLLI), and 125–145 (AWYW…IYWW).

This sequence belongs to the cytochrome c oxidase subunit 3 family. Component of the cytochrome c oxidase (complex IV, CIV), a multisubunit enzyme composed of a catalytic core of 3 subunits and several supernumerary subunits. The complex exists as a monomer or a dimer and forms supercomplexes (SCs) in the inner mitochondrial membrane with ubiquinol-cytochrome c oxidoreductase (cytochrome b-c1 complex, complex III, CIII).

It localises to the mitochondrion inner membrane. It catalyses the reaction 4 Fe(II)-[cytochrome c] + O2 + 8 H(+)(in) = 4 Fe(III)-[cytochrome c] + 2 H2O + 4 H(+)(out). Its function is as follows. Component of the cytochrome c oxidase, the last enzyme in the mitochondrial electron transport chain which drives oxidative phosphorylation. The respiratory chain contains 3 multisubunit complexes succinate dehydrogenase (complex II, CII), ubiquinol-cytochrome c oxidoreductase (cytochrome b-c1 complex, complex III, CIII) and cytochrome c oxidase (complex IV, CIV), that cooperate to transfer electrons derived from NADH and succinate to molecular oxygen, creating an electrochemical gradient over the inner membrane that drives transmembrane transport and the ATP synthase. Cytochrome c oxidase is the component of the respiratory chain that catalyzes the reduction of oxygen to water. Electrons originating from reduced cytochrome c in the intermembrane space (IMS) are transferred via the dinuclear copper A center (CU(A)) of subunit 2 and heme A of subunit 1 to the active site in subunit 1, a binuclear center (BNC) formed by heme A3 and copper B (CU(B)). The BNC reduces molecular oxygen to 2 water molecules using 4 electrons from cytochrome c in the IMS and 4 protons from the mitochondrial matrix. This Spodoptera frugiperda (Fall armyworm) protein is Cytochrome c oxidase subunit 3 (COIII).